Reading from the N-terminus, the 350-residue chain is S-adenosylmethionine:tRNA ribosyltransferase-isomerase (350 aa).

This sequence belongs to the QueA family. As to quaternary structure, monomer.

Its subcellular location is the cytoplasm. The catalysed reaction is 7-aminomethyl-7-carbaguanosine(34) in tRNA + S-adenosyl-L-methionine = epoxyqueuosine(34) in tRNA + adenine + L-methionine + 2 H(+). It participates in tRNA modification; tRNA-queuosine biosynthesis. In terms of biological role, transfers and isomerizes the ribose moiety from AdoMet to the 7-aminomethyl group of 7-deazaguanine (preQ1-tRNA) to give epoxyqueuosine (oQ-tRNA). In Bacillus cereus (strain Q1), this protein is S-adenosylmethionine:tRNA ribosyltransferase-isomerase.